A 542-amino-acid chain; its full sequence is MVSLLRCPSSKPYSSLICSLTLGAVVALSGVAYAEETKPAETVPVVTPPKVISQPATKNQVRFTKTGAFDSDTVVKIAKRLAAKPYVALKDPLPAGLAKLSYDEYRDIRFNPTASIWRDQGVPFQMQMFHRGFYFQDLIEIAIVEGQNATHLAYEPKYFTAGEVITQALPNDDIGYSGFRIHNQLNTNGVFDELMVFQGASYFRALGKGNAYGLSSRGLALKTADAEGEEFPIFRAFWVERPYNDSNLIVVHALLDSPSVAGAYTFSVRPGDNTLIDVEATLFPRVELSKVGLAPSTSMFLHSLNGRHDTDDFRPEVHDSDGLLMLNGRGEHLWRPLANPRQLQVSAFSDNSPQGFGLIQRERDYASYQDLEAHYERRPSLWIEPVGNWGQGSVVLTEIPTESEIHDNIVSYWKPRQPIPAGSEFHFAYRMSWGEEPAAKVGAVHVSRSASGRADIAKATPRRLFVVDYQIEGPMTDEMPVAKVEASGGVVTNVVIARNAAKNGYRLAFELEPEDKELIELRAELKFPTPRQVETWLYRWTL.

A signal peptide spans 1–34 (MVSLLRCPSSKPYSSLICSLTLGAVVALSGVAYA).

This sequence belongs to the OpgD/OpgG family.

It localises to the periplasm. It participates in glycan metabolism; osmoregulated periplasmic glucan (OPG) biosynthesis. In terms of biological role, involved in the biosynthesis of osmoregulated periplasmic glucans (OPGs). The protein is Glucans biosynthesis protein G of Shewanella baltica (strain OS223).